Reading from the N-terminus, the 284-residue chain is L-ribulose-5-phosphate 3-epimerase UlaE (284 aa).

It belongs to the L-ribulose-5-phosphate 3-epimerase family.

The catalysed reaction is L-ribulose 5-phosphate = L-xylulose 5-phosphate. It functions in the pathway cofactor degradation; L-ascorbate degradation; D-xylulose 5-phosphate from L-ascorbate: step 3/4. In terms of biological role, catalyzes the isomerization of L-xylulose-5-phosphate to L-ribulose-5-phosphate. Is involved in the anaerobic L-ascorbate utilization. The sequence is that of L-ribulose-5-phosphate 3-epimerase UlaE from Salmonella choleraesuis (strain SC-B67).